We begin with the raw amino-acid sequence, 264 residues long: Osteopontin (264 aa).

A signal peptide spans 1–16; it reads MKLAFLCLCFISIAAA. 2 disordered regions span residues 21–141 and 166–264; these read KSRQ…RGDS and IEDD…EVTR. Residues 31–51 are compositionally biased toward basic and acidic residues; sequence SEEKYDPRSHHTHRYHQDHVD. A compositionally biased stretch (polar residues) spans 52–73; the sequence is SQSQEHLQQTQNDLASLQQTHY. A compositionally biased stretch (acidic residues) spans 97–118; it reads AVDDDDDDDNDSNDTDESDEVV. Residues Asn-106 and Asn-109 are each glycosylated (N-linked (GlcNAc...) asparagine). A Cell attachment site motif is present at residues 132-134; the sequence is RGD. Basic and acidic residues predominate over residues 186 to 212; that stretch reads KESREQDSRELAQHQSVENDSRPRFDS. Asn-204 and Asn-242 each carry an N-linked (GlcNAc...) asparagine glycan. Residues 233–246 are compositionally biased toward polar residues; the sequence is ASRSAVDTSNQTLE. Basic and acidic residues predominate over residues 252–264; the sequence is EDRHSIENNEVTR.

The protein belongs to the osteopontin family. Extensively phosphorylated on serine residues.

It is found in the secreted. Its function is as follows. Major non-collagenous bone protein that binds tightly to hydroxyapatite. Appears to form an integral part of the mineralized matrix. Probably important to cell-matrix interaction. Functionally, acts as a cytokine involved in enhancing production of interferon-gamma and interleukin-12 and reducing production of interleukin-10 and is essential in the pathway that leads to type I immunity. This Gallus gallus (Chicken) protein is Osteopontin (SPP1).